A 331-amino-acid chain; its full sequence is Malate dehydrogenase (331 aa).

Residue Gly14–Gly20 participates in NAD(+) binding. Substrate contacts are provided by Arg95 and Arg101. NAD(+)-binding positions include Asn108, Gln115, and Val132 to Asn134. Asn134 and Arg165 together coordinate substrate. The active-site Proton acceptor is the His190.

Belongs to the LDH/MDH superfamily. MDH type 2 family.

It catalyses the reaction (S)-malate + NAD(+) = oxaloacetate + NADH + H(+). Functionally, catalyzes the reversible oxidation of malate to oxaloacetate. In Rhodococcus opacus (strain B4), this protein is Malate dehydrogenase.